The chain runs to 224 residues: Attacin-A (224 aa).

The signal sequence occupies residues 1–20 (MQKTSILIVALVALFAITEA). Residues 21–34 (LPSLPTTGPIRVRR) constitute a propeptide that is removed on maturation.

This sequence belongs to the attacin/sarcotoxin-2 family. As to expression, hemolymph (at protein level).

The protein resides in the secreted. Its function is as follows. Hemolymph antibacterial protein. The chain is Attacin-A (AttA) from Drosophila melanogaster (Fruit fly).